A 136-amino-acid chain; its full sequence is Large ribosomal subunit protein uL16 (136 aa).

This sequence belongs to the universal ribosomal protein uL16 family. As to quaternary structure, part of the 50S ribosomal subunit.

Functionally, binds 23S rRNA and is also seen to make contacts with the A and possibly P site tRNAs. This Wigglesworthia glossinidia brevipalpis protein is Large ribosomal subunit protein uL16.